A 542-amino-acid chain; its full sequence is CTP synthase (542 aa).

The amidoligase domain stretch occupies residues 1–265 (MTRYVFITGG…DREVLALFGI (265 aa)). Ser-13 serves as a coordination point for CTP. Ser-13 lines the UTP pocket. ATP-binding positions include 14-19 (SLGKGL) and Asp-71. The Mg(2+) site is built by Asp-71 and Glu-139. CTP-binding positions include 146-148 (DIE), 186-191 (KTKPTQ), and Lys-222. Residues 186–191 (KTKPTQ) and Lys-222 each bind UTP. Position 238–240 (238–240 (RDV)) interacts with ATP. In terms of domain architecture, Glutamine amidotransferase type-1 spans 291–541 (SIAIVGKYTG…IGAAVVQSRL (251 aa)). Gly-353 lines the L-glutamine pocket. The active-site Nucleophile; for glutamine hydrolysis is Cys-380. Residues 381 to 384 (FGMQ), Glu-404, and Arg-469 contribute to the L-glutamine site. Residues His-514 and Glu-516 contribute to the active site.

Belongs to the CTP synthase family. In terms of assembly, homotetramer.

The catalysed reaction is UTP + L-glutamine + ATP + H2O = CTP + L-glutamate + ADP + phosphate + 2 H(+). It catalyses the reaction L-glutamine + H2O = L-glutamate + NH4(+). The enzyme catalyses UTP + NH4(+) + ATP = CTP + ADP + phosphate + 2 H(+). Its pathway is pyrimidine metabolism; CTP biosynthesis via de novo pathway; CTP from UDP: step 2/2. Its activity is regulated as follows. Allosterically activated by GTP, when glutamine is the substrate; GTP has no effect on the reaction when ammonia is the substrate. The allosteric effector GTP functions by stabilizing the protein conformation that binds the tetrahedral intermediate(s) formed during glutamine hydrolysis. Inhibited by the product CTP, via allosteric rather than competitive inhibition. Catalyzes the ATP-dependent amination of UTP to CTP with either L-glutamine or ammonia as the source of nitrogen. Regulates intracellular CTP levels through interactions with the four ribonucleotide triphosphates. This Methylobacterium nodulans (strain LMG 21967 / CNCM I-2342 / ORS 2060) protein is CTP synthase.